Consider the following 206-residue polypeptide: GTP-binding protein YPTC5 (206 aa).

GTP is bound at residue 15 to 22; it reads GDSGVGKT. The Effector region motif lies at 37–45; that stretch reads YKATIGADF. Residues 63 to 67 and 125 to 128 each bind GTP; these read DTAGQ and NKID. 2 S-geranylgeranyl cysteine lipidation sites follow: cysteine 205 and cysteine 206.

This sequence belongs to the small GTPase superfamily. Rab family.

It is found in the cell membrane. Functionally, protein transport. Probably involved in vesicular traffic. The sequence is that of GTP-binding protein YPTC5 (YPTC5) from Chlamydomonas reinhardtii (Chlamydomonas smithii).